A 65-amino-acid polypeptide reads, in one-letter code: Large ribosomal subunit protein bL35 (65 aa).

The disordered stretch occupies residues 1–65; it reads MPKIKTNRAA…GRLDRMLPYL (65 aa). Residues 10 to 44 show a composition bias toward basic residues; it reads AAKRFRKTASGKYKAGHANRSHILTKKATKRKRNL. Basic and acidic residues predominate over residues 50–65; the sequence is VRAEDAGRLDRMLPYL.

The protein belongs to the bacterial ribosomal protein bL35 family.

The sequence is that of Large ribosomal subunit protein bL35 from Xylella fastidiosa (strain M23).